A 508-amino-acid chain; its full sequence is Putative glycosyl hydrolase ecdF (508 aa).

The first 15 residues, methionine 1–alanine 15, serve as a signal peptide directing secretion. 4 N-linked (GlcNAc...) asparagine glycosylation sites follow: asparagine 99, asparagine 122, asparagine 275, and asparagine 362.

Belongs to the glycosyl hydrolase 32 family.

The protein is Putative glycosyl hydrolase ecdF of Aspergillus rugulosus (Emericella rugulosa).